We begin with the raw amino-acid sequence, 156 residues long: ATP synthase subunit b (156 aa).

Residues Ala-11 to Ala-31 traverse the membrane as a helical segment.

This sequence belongs to the ATPase B chain family. In terms of assembly, F-type ATPases have 2 components, F(1) - the catalytic core - and F(0) - the membrane proton channel. F(1) has five subunits: alpha(3), beta(3), gamma(1), delta(1), epsilon(1). F(0) has three main subunits: a(1), b(2) and c(10-14). The alpha and beta chains form an alternating ring which encloses part of the gamma chain. F(1) is attached to F(0) by a central stalk formed by the gamma and epsilon chains, while a peripheral stalk is formed by the delta and b chains.

The protein localises to the cell inner membrane. In terms of biological role, f(1)F(0) ATP synthase produces ATP from ADP in the presence of a proton or sodium gradient. F-type ATPases consist of two structural domains, F(1) containing the extramembraneous catalytic core and F(0) containing the membrane proton channel, linked together by a central stalk and a peripheral stalk. During catalysis, ATP synthesis in the catalytic domain of F(1) is coupled via a rotary mechanism of the central stalk subunits to proton translocation. Its function is as follows. Component of the F(0) channel, it forms part of the peripheral stalk, linking F(1) to F(0). This Aeromonas hydrophila subsp. hydrophila (strain ATCC 7966 / DSM 30187 / BCRC 13018 / CCUG 14551 / JCM 1027 / KCTC 2358 / NCIMB 9240 / NCTC 8049) protein is ATP synthase subunit b.